The chain runs to 764 residues: FHF complex subunit HOOK interacting protein 2A (764 aa).

Residues 190 to 236 form a disordered region; sequence SEDGPKGQDPGSGDVSQCQQPQELSGATGVEPTESEEEPPHQMDDLS. A compositionally biased stretch (polar residues) spans 203-214; the sequence is DVSQCQQPQELS.

Belongs to the FHIP family.

May be required for proper functioning of the nervous system. This chain is FHF complex subunit HOOK interacting protein 2A, found in Mus musculus (Mouse).